A 282-amino-acid polypeptide reads, in one-letter code: uncharacterized protein (282 aa).

6 helical membrane-spanning segments follow: residues 18-38 (PIVLLIPVPGSSVIHDLWAGT), 40-60 (LLVVFGISVLLTFYPGWVTIG), 87-107 (LWIVLAIGFLTAALAGGTPVV), 119-139 (ALHFLRITALSVVLLALGAMV), 164-184 (IPVDEWAVALALALRAFPMLI), and 260-280 (VTLAITAMASGTAVAIESLIL).

Belongs to the CbiQ family.

It is found in the cell membrane. This is an uncharacterized protein from Mycobacterium tuberculosis (strain CDC 1551 / Oshkosh).